We begin with the raw amino-acid sequence, 538 residues long: Beta-1,4-mannosyl-glycoprotein 4-beta-N-acetylglucosaminyltransferase (538 aa).

The Cytoplasmic portion of the chain corresponds to 1–7 (MKMRRYK). The chain crosses the membrane as a helical; Signal-anchor for type II membrane protein span at residues 8-23 (LFLMFCMAGLCLISFL). At 24–538 (HFFKTLSYVT…VRGKLDTTEG (515 aa)) the chain is on the lumenal side. A disordered region spans residues 121–151 (GTRMLEKPSPGRTEEKTKVAEGSSVRGPARR). N-linked (GlcNAc...) asparagine glycosylation is found at Asn245, Asn263, and Asn401. The tract at residues 509–538 (PKSTVEGGRRNQGSDGRSSAVRGKLDTTEG) is disordered.

It belongs to the glycosyltransferase 17 family. Interacts with MGAT4D.

The protein localises to the golgi apparatus membrane. It carries out the reaction N(4)-{beta-D-GlcNAc-(1-&gt;2)-alpha-D-Man-(1-&gt;3)-[beta-D-GlcNAc-(1-&gt;2)-alpha-D-Man-(1-&gt;6)]-beta-D-Man-(1-&gt;4)-beta-D-GlcNAc-(1-&gt;4)-beta-D-GlcNAc}-L-asparaginyl-[protein] + UDP-N-acetyl-alpha-D-glucosamine = N(4)-{beta-D-GlcNAc-(1-&gt;2)-alpha-D-Man-(1-&gt;3)-[beta-D-GlcNAc-(1-&gt;4)]-[beta-D-GlcNAc-(1-&gt;2)-alpha-D-Man-(1-&gt;6)]-beta-D-Man-(1-&gt;4)-beta-D-GlcNAc-(1-&gt;4)-beta-D-GlcNAc}-L-asparaginyl-[protein] + UDP + H(+). The protein operates within protein modification; protein glycosylation. It is involved in the regulation of the biosynthesis and biological function of glycoprotein oligosaccharides. Catalyzes the addition of N-acetylglucosamine in beta 1-4 linkage to the beta-linked mannose of the trimannosyl core of N-linked sugar chains, called bisecting N-acetylglucosamine (GlcNAc). It is one of the most important enzymes involved in the regulation of the biosynthesis of glycoprotein oligosaccharides. The addition of this bisecting GlcNAc residue alters not only the composition, but also the conformation of the N-glycan. The introduction of the bisecting GlcNAc residue results in the suppression of further processing and elongation of N-glycans, precluding the formation of beta-1,6 GlcNAc branching, catalyzed by MGAT5 since it is unable to use the bisected oligosaccharide as a substrate. Addition of bisecting N-acetylglucosamine to CDH1/E-cadherin modulates CDH1 cell membrane location. Inhibits NeuAc-alpha-2,3-Gal-beta-1,4-GlcNAc- formation which modulates sialylation levels and plays a role in cell migration regulation. In brain, addition of bisecting N-acetylglucosamine to BACE1 blocks its lysosomal targeting in response to oxidative stress and further degradation which increases its location to early endosome and the APP cleavage. This is Beta-1,4-mannosyl-glycoprotein 4-beta-N-acetylglucosaminyltransferase (Mgat3) from Rattus norvegicus (Rat).